Reading from the N-terminus, the 430-residue chain is Isochorismate synthase MenF (430 aa).

K187 functions as the Proton acceptor in the catalytic mechanism. The Proton donor role is filled by E237. Mg(2+) is bound by residues E281 and E414.

The protein belongs to the isochorismate synthase family. Requires Mg(2+) as cofactor.

The enzyme catalyses chorismate = isochorismate. It participates in quinol/quinone metabolism; 1,4-dihydroxy-2-naphthoate biosynthesis; 1,4-dihydroxy-2-naphthoate from chorismate: step 1/7. It functions in the pathway quinol/quinone metabolism; menaquinone biosynthesis. Functionally, catalyzes the conversion of chorismate to isochorismate. In Haemophilus influenzae (strain ATCC 51907 / DSM 11121 / KW20 / Rd), this protein is Isochorismate synthase MenF.